The sequence spans 272 residues: MFDNLSGVSYGLLAGILAMLIHLVYQKITELKRRKDELKERESHPTDDLFPKEDFIPYHPSRYSEEEMIKRSNDFYLSMNARRSVRFFSNEDVPDEVIDNIIRTAGTSPSGAHTEPWTFVVIKNKLLKAKVREIIEEEEELNYKQRMGQKWVDDLKPLKTNWIKEYLTEAPYLILVFKQTYGITEDGQKKTHYYNEISASISCGFLLAAIQNAGLVALTSTPLNAGSKLRNLVGRGPNEKIVILLPVGYPSKNCQVPNLKRKPLNEIMIKFD.

The chain crosses the membrane as a helical span at residues 5–25; sequence LSGVSYGLLAGILAMLIHLVY. FMN contacts are provided by residues 82–86, S110, and 110–111; these read RRSVR and SG. Positions 112, 139, 143, and 164 each coordinate 3-iodo-L-tyrosine. FMN is bound by residues 219 to 221 and R261; that span reads TST.

The protein belongs to the nitroreductase family. FMN is required as a cofactor.

It localises to the membrane. The catalysed reaction is 2 iodide + L-tyrosine + 2 NADP(+) = 3,5-diiodo-L-tyrosine + 2 NADPH + H(+). It carries out the reaction iodide + L-tyrosine + NADP(+) = 3-iodo-L-tyrosine + NADPH. The enzyme catalyses 3-iodo-L-tyrosine + iodide + NADP(+) = 3,5-diiodo-L-tyrosine + NADPH + H(+). It catalyses the reaction L-tyrosine + chloride + NADP(+) = 3-chloro-L-tyrosine + NADPH. The catalysed reaction is bromide + L-tyrosine + NADP(+) = 3-bromo-L-tyrosine + NADPH. Its function is as follows. Catalyzes the dehalogenation of halotyrosines such as 3,5-diiodo-L-tyrosine. Likely to also catalyze the dehalogenation of other halotyrosines such as 3-bromo-L-tyrosine, 3-chloro-L-tyrosine and 3-iodo-L-tyrosine. The polypeptide is Iodotyrosine deiodinase (Hydra vulgaris (Hydra)).